The chain runs to 100 residues: Urease subunit gamma (100 aa).

Belongs to the urease gamma subunit family. Heterotrimer of UreA (gamma), UreB (beta) and UreC (alpha) subunits. Three heterotrimers associate to form the active enzyme.

It localises to the cytoplasm. The enzyme catalyses urea + 2 H2O + H(+) = hydrogencarbonate + 2 NH4(+). The protein operates within nitrogen metabolism; urea degradation; CO(2) and NH(3) from urea (urease route): step 1/1. This Rhizobium etli (strain CIAT 652) protein is Urease subunit gamma.